Here is a 153-residue protein sequence, read N- to C-terminus: Cytochrome c-type biogenesis protein CcmE (153 aa).

The Cytoplasmic portion of the chain corresponds to 1-8 (MATRRGRR). Residues 9 to 29 (ALLIAGGVGLLALAAALVLNA) traverse the membrane as a helical; Signal-anchor for type II membrane protein segment. Residues 30-153 (LRSNLVFFFS…PSATLQTEAR (124 aa)) lie on the Periplasmic side of the membrane. 2 residues coordinate heme: His124 and Tyr128.

This sequence belongs to the CcmE/CycJ family.

It is found in the cell inner membrane. Its function is as follows. Heme chaperone required for the biogenesis of c-type cytochromes. Transiently binds heme delivered by CcmC and transfers the heme to apo-cytochromes in a process facilitated by CcmF and CcmH. The sequence is that of Cytochrome c-type biogenesis protein CcmE from Bordetella bronchiseptica (strain ATCC BAA-588 / NCTC 13252 / RB50) (Alcaligenes bronchisepticus).